Reading from the N-terminus, the 460-residue chain is 3'3'-cGAMP-specific phosphodiesterase 3 (460 aa).

Residues 28-189 enclose the HD domain; it reads PPEHCIRCCW…IPLFSRIALL (162 aa). Positions 260–455 constitute an HD-GYP domain; it reads DDAYLECIVT…LPDEYTQLPH (196 aa). A divalent metal cation is bound by residues H317 and D318. Catalysis depends on K321, which acts as the Proton donor. A divalent metal cation contacts are provided by H346, H370, H371, and D399.

Monomer. The cofactor is Mn(2+).

It catalyses the reaction 3',3'-cGAMP + H2O = 5'-pApG-3' + H(+). In terms of biological role, phosphodiesterase (PDE) that catalyzes the hydrolysis of 3'3'-cyclic GMP-AMP (3'3'-cGAMP), leading to linear 5'-pApG. Counteracts the function of the 3'3'-cGAMP synthase DncV, and is involved in the modulation of intracellular 3'3'-cGAMP levels. Enhances bacterial chemotaxis and inhibits intestinal colonization in vivo. Thus exerts a crucial role in regulating bacterial infectivity through catalyzing 3'3'-cGAMP degradation. Is specific for 3'3'-cGAMP since it cannot degrade other cGAMP linkage isomers (3'2'-, 2'3'-, and 2'2'-cGAMPs); is also able to hydrolyze c-di-GMP but not c-di-AMP. The polypeptide is 3'3'-cGAMP-specific phosphodiesterase 3 (Vibrio cholerae serotype O1 (strain ATCC 39315 / El Tor Inaba N16961)).